Reading from the N-terminus, the 352-residue chain is Uroporphyrinogen decarboxylase (352 aa).

Substrate is bound by residues 26–30 (RQAGR), Asp76, Tyr153, Ser208, and His323.

The protein belongs to the uroporphyrinogen decarboxylase family. As to quaternary structure, homodimer.

Its subcellular location is the cytoplasm. It catalyses the reaction uroporphyrinogen III + 4 H(+) = coproporphyrinogen III + 4 CO2. Its pathway is porphyrin-containing compound metabolism; protoporphyrin-IX biosynthesis; coproporphyrinogen-III from 5-aminolevulinate: step 4/4. Its function is as follows. Catalyzes the decarboxylation of four acetate groups of uroporphyrinogen-III to yield coproporphyrinogen-III. The sequence is that of Uroporphyrinogen decarboxylase from Prochlorococcus marinus (strain MIT 9303).